The following is a 216-amino-acid chain: Imidazole glycerol phosphate synthase subunit HisH (216 aa).

The Glutamine amidotransferase type-1 domain maps to 2–216 (RVAIIDYGSG…LIANFLKWKP (215 aa)). C88 serves as the catalytic Nucleophile. Active-site residues include H196 and E198.

As to quaternary structure, heterodimer of HisH and HisF.

The protein localises to the cytoplasm. It carries out the reaction 5-[(5-phospho-1-deoxy-D-ribulos-1-ylimino)methylamino]-1-(5-phospho-beta-D-ribosyl)imidazole-4-carboxamide + L-glutamine = D-erythro-1-(imidazol-4-yl)glycerol 3-phosphate + 5-amino-1-(5-phospho-beta-D-ribosyl)imidazole-4-carboxamide + L-glutamate + H(+). The catalysed reaction is L-glutamine + H2O = L-glutamate + NH4(+). It functions in the pathway amino-acid biosynthesis; L-histidine biosynthesis; L-histidine from 5-phospho-alpha-D-ribose 1-diphosphate: step 5/9. In terms of biological role, IGPS catalyzes the conversion of PRFAR and glutamine to IGP, AICAR and glutamate. The HisH subunit catalyzes the hydrolysis of glutamine to glutamate and ammonia as part of the synthesis of IGP and AICAR. The resulting ammonia molecule is channeled to the active site of HisF. The chain is Imidazole glycerol phosphate synthase subunit HisH from Brucella suis biovar 1 (strain 1330).